The primary structure comprises 962 residues: MTTETLTQLEQHELFIRRHIGPDSAQQQEMLNFVGAESLEDLTQQIVPESIRLNRDLAVGSACGEAEGMAYIREIADKNKVFKSYIGMGYYGTEVPSVIQRNVLENPGWYTAYTPYQPEIAQGRLEAILNFQQVSMDLTGLDLASASLLDEATAAAEAMALAKRVSKAKKANIFFVADDVFPQTLDVVKTRAECFGFEIVVGPASEAVNYELFGALFQYTNRFGEITDFTELFTELKAKKAVVSVAADIMSLVMLKSPGSMGADVVFGSAQRFGVPMGLGGPHAAFFVTRDAHKRSLPGRIIGVSQDTRGNRALRMAMQTREQHIRREKANSNICTAQVLLANMASFYAVYHGPQGLKIIAERIHRLTDILASGLTAKGVELVNGTWFDTLSLKATDSEAITARAVAAGINLRIDSDGVLGVSLAETTLREDIAELFDVILGEGHGLDVAALDAEIIKAGSSSIPAQLVRTDAILTHPTFNSYHSETEMMRYIKRLENKDLALNHSMISLGSCTMKLNAATEMMPISWPEFGNMHPFCPLDQSEGYTDLIEELSTWLVDITGYDAMCMQANSGASGEYAGLLAIRNYHISRGDAHRNVCLIPQSAHGTNPASAQMAGMKIVVTACDKAGNVDMEDLKAKAAEVAENLSCIMITYPSTHGVYEETVSEICEVIHQHGGQVYLDGANMNAQVGLTTPGSIGADVSHLNLHKTFAIPHGGGGPGMGPIGVKAHLAPFVAGHVVVKHGRESDNNGAVSAAPYGSASILPITWMYIKLLGHQGLRQSTQVALLNANYVMKKLSEHYPVLYTGRNERVAHECIIDLRPLKESSGVTEMDIAKRLNDYGFHAPTMSFPVAGTLMIEPTESESKVELDRFIEAMISIRGEASRVESGEWPADNNPLHNAPHTLADIMDPEFDSRPYSREVAVFPTAAVKLNKFWPTVNRIDDVFGDRNLFCACVPMSEYE.

N6-(pyridoxal phosphate)lysine is present on K709.

Belongs to the GcvP family. In terms of assembly, the glycine cleavage system is composed of four proteins: P, T, L and H. Pyridoxal 5'-phosphate serves as cofactor.

It carries out the reaction N(6)-[(R)-lipoyl]-L-lysyl-[glycine-cleavage complex H protein] + glycine + H(+) = N(6)-[(R)-S(8)-aminomethyldihydrolipoyl]-L-lysyl-[glycine-cleavage complex H protein] + CO2. Its function is as follows. The glycine cleavage system catalyzes the degradation of glycine. The P protein binds the alpha-amino group of glycine through its pyridoxal phosphate cofactor; CO(2) is released and the remaining methylamine moiety is then transferred to the lipoamide cofactor of the H protein. This Shewanella sediminis (strain HAW-EB3) protein is Glycine dehydrogenase (decarboxylating).